The sequence spans 245 residues: Probable 2-phosphosulfolactate phosphatase (245 aa).

Belongs to the ComB family. The cofactor is Mg(2+).

The enzyme catalyses (2R)-O-phospho-3-sulfolactate + H2O = (2R)-3-sulfolactate + phosphate. The protein is Probable 2-phosphosulfolactate phosphatase of Trichormus variabilis (strain ATCC 29413 / PCC 7937) (Anabaena variabilis).